The primary structure comprises 2278 residues: Protein Ycf2 (2278 aa).

1632-1639 contacts ATP; that stretch reads GSIGTGRS.

This sequence belongs to the Ycf2 family.

Its subcellular location is the plastid. The protein localises to the chloroplast stroma. In terms of biological role, probable ATPase of unknown function. Its presence in a non-photosynthetic plant (Epifagus virginiana) and experiments in tobacco indicate that it has an essential function which is probably not related to photosynthesis. The polypeptide is Protein Ycf2 (Solanum tuberosum (Potato)).